Reading from the N-terminus, the 299-residue chain is Dihydroorotate dehydrogenase B (NAD(+)), catalytic subunit (299 aa).

Residues Ser19 and 43–44 (KS) contribute to the FMN site. Residues Lys43, 67–71 (NAMGL), and Asn121 each bind substrate. Asn121 serves as a coordination point for FMN. The active-site Nucleophile is Cys124. The FMN site is built by Lys159 and Ile185. Position 186-187 (186-187 (NT)) interacts with substrate. Residues Gly211, 237 to 238 (GG), and 259 to 260 (GT) contribute to the FMN site.

It belongs to the dihydroorotate dehydrogenase family. Type 1 subfamily. Heterotetramer of 2 PyrK and 2 PyrD type B subunits. FMN is required as a cofactor.

It is found in the cytoplasm. It catalyses the reaction (S)-dihydroorotate + NAD(+) = orotate + NADH + H(+). The protein operates within pyrimidine metabolism; UMP biosynthesis via de novo pathway; orotate from (S)-dihydroorotate (NAD(+) route): step 1/1. Catalyzes the conversion of dihydroorotate to orotate with NAD(+) as electron acceptor. The chain is Dihydroorotate dehydrogenase B (NAD(+)), catalytic subunit (pyrD) from Pyrococcus abyssi (strain GE5 / Orsay).